A 380-amino-acid polypeptide reads, in one-letter code: 3-isopropylmalate dehydrogenase (380 aa).

79 to 90 (GPEWAGVHPTPE) contacts NAD(+). Substrate is bound by residues arginine 97, arginine 107, arginine 136, and aspartate 229. Residues aspartate 229, aspartate 254, and aspartate 258 each contribute to the Mg(2+) site. NAD(+) is bound at residue 294–306 (GSAPDISGKGLAN).

It belongs to the isocitrate and isopropylmalate dehydrogenases family. Homodimer. It depends on Mg(2+) as a cofactor. The cofactor is Mn(2+).

It is found in the cytoplasm. The enzyme catalyses (2R,3S)-3-isopropylmalate + NAD(+) = 4-methyl-2-oxopentanoate + CO2 + NADH. It participates in amino-acid biosynthesis; L-leucine biosynthesis; L-leucine from 3-methyl-2-oxobutanoate: step 3/4. Its function is as follows. Catalyzes the oxidation of 3-carboxy-2-hydroxy-4-methylpentanoate (3-isopropylmalate) to 3-carboxy-4-methyl-2-oxopentanoate. The product decarboxylates to 4-methyl-2 oxopentanoate. The chain is 3-isopropylmalate dehydrogenase (LEU2) from Hapsidospora chrysogena (Acremonium chrysogenum).